We begin with the raw amino-acid sequence, 230 residues long: Demethylmenaquinone methyltransferase (230 aa).

S-adenosyl-L-methionine contacts are provided by residues Thr-62, Asp-80, 100 to 101 (DG), and Ser-117.

Belongs to the class I-like SAM-binding methyltransferase superfamily. MenG/UbiE family.

It carries out the reaction a 2-demethylmenaquinol + S-adenosyl-L-methionine = a menaquinol + S-adenosyl-L-homocysteine + H(+). Its pathway is quinol/quinone metabolism; menaquinone biosynthesis; menaquinol from 1,4-dihydroxy-2-naphthoate: step 2/2. Its function is as follows. Methyltransferase required for the conversion of demethylmenaquinol (DMKH2) to menaquinol (MKH2). The chain is Demethylmenaquinone methyltransferase from Corynebacterium urealyticum (strain ATCC 43042 / DSM 7109).